The chain runs to 593 residues: Probable ubiquitin carboxyl-terminal hydrolase 4 (593 aa).

Residues isoleucine 227–serine 573 enclose the USP domain. Residue cysteine 236 is the Nucleophile of the active site. 2 positions are modified to phosphoserine: serine 338 and serine 343. The active-site Proton acceptor is histidine 530.

Belongs to the peptidase C19 family. In terms of assembly, interacts with sfp47.

It is found in the cytoplasm. The protein resides in the endosome. The enzyme catalyses Thiol-dependent hydrolysis of ester, thioester, amide, peptide and isopeptide bonds formed by the C-terminal Gly of ubiquitin (a 76-residue protein attached to proteins as an intracellular targeting signal).. In terms of biological role, has an ATP-independent isopeptidase activity, cleaving at the C-terminus of the ubiquitin moiety. Acts late in the proteolytic pathway in conjunction with the 26S proteasome. Plays a role in avoiding DNA overreplication. The sequence is that of Probable ubiquitin carboxyl-terminal hydrolase 4 (ubp4) from Schizosaccharomyces pombe (strain 972 / ATCC 24843) (Fission yeast).